Consider the following 504-residue polypeptide: Maturase K (504 aa).

Belongs to the intron maturase 2 family. MatK subfamily.

It localises to the plastid. The protein resides in the chloroplast. Usually encoded in the trnK tRNA gene intron. Probably assists in splicing its own and other chloroplast group II introns. In Thlaspi arvense (Field penny-cress), this protein is Maturase K.